The primary structure comprises 103 residues: Large ribosomal subunit protein bL21 (103 aa).

Belongs to the bacterial ribosomal protein bL21 family. As to quaternary structure, part of the 50S ribosomal subunit. Contacts protein L20.

This protein binds to 23S rRNA in the presence of protein L20. This Ralstonia pickettii (strain 12J) protein is Large ribosomal subunit protein bL21.